The following is a 409-amino-acid chain: Adenosine receptor A2a (409 aa).

Residues 1–4 (MSSS) are Extracellular-facing. A helical membrane pass occupies residues 5-29 (VYITVELVIAVLAILGNVLVCWAVW). Topologically, residues 30-39 (INSNLQNVTN) are cytoplasmic. A helical transmembrane segment spans residues 40–63 (YFVVSLAAADIAVGVLAIPFAITI). The Extracellular segment spans residues 64–74 (STGFCAACHGC). 3 disulfides stabilise this stretch: Cys-68-Cys-156, Cys-71-Cys-143, and Cys-74-Cys-163. Residues 75 to 97 (LFFACFVLVLTQSSIFSLLTITI) traverse the membrane as a helical segment. Residues 98–117 (DRYIAIRIPLRYNGLVTCTR) are Cytoplasmic-facing. A helical transmembrane segment spans residues 118 to 140 (AKGIIAICWVLSFAIGLTPMLGW). The Extracellular segment spans residues 141-170 (NNCSQPKGDKNHSESCDEGQVTCLFEDVVP). N-linked (GlcNAc...) asparagine glycans are attached at residues Asn-142 and Asn-151. Glu-166 lines the adenosine pocket. The chain crosses the membrane as a helical span at residues 171 to 195 (MNYMVYYNFFAFVLVPLLLMLGIYL). Topologically, residues 196–231 (RIFLAARRQLKQMESQPLPGERTRSTLQKEVHPAKS) are cytoplasmic. Residues 232-255 (LAIIVGLFALCCLPLNIINCFTFF) form a helical membrane-spanning segment. Asn-250 contributes to the adenosine binding site. A disulfide bridge links Cys-256 with Cys-259. Topologically, residues 256–263 (CPECDHAP) are extracellular. The helical transmembrane segment at 264–287 (PWLMYLTIILSHGNSVVNPLIYAY) threads the bilayer. Adenosine is bound by residues Ser-274 and His-275. Residues 288-409 (RIREFRQTFR…PPAHGGAGVS (122 aa)) lie on the Cytoplasmic side of the membrane. Disordered stretches follow at residues 316–336 (TSARASAAHSPEGEQVSLRLN) and 369–409 (QRSH…AGVS).

This sequence belongs to the G-protein coupled receptor 1 family. As to quaternary structure, interacts (via cytoplasmic C-terminal domain) with USP4; the interaction is direct. May interact with DRD4. Interacts with NECAB2. Interacts (via cytoplasmic C-terminal domain) with GAS2L2; interaction enhances receptor-mediated adenylyl cyclase activity. Post-translationally, ubiquitinated. Deubiquitinated by USP4; leading to stabilization and expression at the cell surface.

Its subcellular location is the cell membrane. Receptor for adenosine. The activity of this receptor is mediated by G proteins which activate adenylyl cyclase. The protein is Adenosine receptor A2a (ADORA2A) of Cavia porcellus (Guinea pig).